The sequence spans 272 residues: Insulin-like growth factor-binding protein 5 (272 aa).

Residues 1-20 (MVLLTAVLLLLAAYAGPAQS) form the signal peptide. Residues 23 to 103 (SFVHCEPCDE…LHGRGVCLNE (81 aa)) enclose the IGFBP N-terminal domain. Disulfide bonds link Cys27–Cys53, Cys30–Cys55, Cys38–Cys56, Cys45–Cys59, Cys67–Cys80, and Cys74–Cys100. Residues 111-122 (KIERDSREHEEP) are compositionally biased toward basic and acidic residues. The tract at residues 111–130 (KIERDSREHEEPTTSEMAEE) is disordered. Ser116 is modified (phosphoserine; by FAM20C). The O-linked (HexNAc...) threonine glycan is linked to Thr172. Positions 189 to 263 (QGPCRRHMEA…MEYVDGDFQC (75 aa)) constitute a Thyroglobulin type-1 domain. 3 disulfides stabilise this stretch: Cys192/Cys219, Cys230/Cys241, and Cys243/Cys263.

In terms of assembly, interacts with IGF1; this interaction enhances the growth stimulatory effects of IGF1 on fibroblasts. Interacts with CAV1; this interaction allows trafficking of IGFBP5 from the plasma membrane to the nucleus. Interacts with NCL; this interaction is necessary for IGFBP5 localization to the nucleus. Cleaved by C1S in extracellular space. As to expression, osteosarcoma, and at lower levels in liver, kidney and brain.

It is found in the secreted. It localises to the cytoplasm. The protein localises to the nucleus. In terms of biological role, multifunctional protein that plays a critical role in regulating the availability of IGFs to their receptors and thereby regulates IGF-mediated cellular processes including proliferation, differentiation, and apoptosis in a cell-type specific manner. Increases the cell proliferation of osteoblasts, intestinal smooth muscle cells and neuroblastoma cells. Enhances adhesion and survival of epithelial cells but decreases adhesion of mesenchymal cells. Once secreted, acts as a major mediator of mTORC1-dependent feedback inhibition of IGF1 signaling. Also plays a role in the induction of extracellular matrix (ECM) production and deposition independently of its nuclear translocation and binding to IGFs. Acts itself as a growth factor that can act independently of IGFs to regulate bone formation. Acts as a ligand for the ROR1 receptor which triggers formation of ROR1/HER2 heterodimer to enhance CREB oncogenic signaling. In Homo sapiens (Human), this protein is Insulin-like growth factor-binding protein 5 (IGFBP5).